Here is a 410-residue protein sequence, read N- to C-terminus: Argininosuccinate synthase (410 aa).

Residue 10-18 (AYSGGLDTS) participates in ATP binding. Residues Y88 and S93 each contribute to the L-citrulline site. Residue G118 participates in ATP binding. 3 residues coordinate L-aspartate: T120, N124, and D125. An L-citrulline-binding site is contributed by N124. Positions 128, 177, 186, 262, and 274 each coordinate L-citrulline.

Belongs to the argininosuccinate synthase family. Type 1 subfamily. Homotetramer.

The protein resides in the cytoplasm. It catalyses the reaction L-citrulline + L-aspartate + ATP = 2-(N(omega)-L-arginino)succinate + AMP + diphosphate + H(+). The protein operates within amino-acid biosynthesis; L-arginine biosynthesis; L-arginine from L-ornithine and carbamoyl phosphate: step 2/3. The polypeptide is Argininosuccinate synthase (Thermoanaerobacter pseudethanolicus (strain ATCC 33223 / 39E) (Clostridium thermohydrosulfuricum)).